The sequence spans 610 residues: POU domain, class 6, transcription factor 1 (610 aa).

Positions 55 to 87 (SSAGAAESGGDEEGSGQSLEATEEAQLDGPVTT) are disordered. Positions 448–522 (EEAINLEEIR…VLERWLAEAE (75 aa)) constitute a POU-specific domain. Positions 543–602 (KRKRRTSFTPQAIEVLNTYFEKNSLPTGQEITEIAKELNYDREVVRVWFCNRRQTLKNTS) form a DNA-binding region, homeobox.

The protein belongs to the POU transcription factor family. Class-6 subfamily. In terms of tissue distribution, ubiquitously expressed during embryogenesis.

The protein resides in the nucleus. Its function is as follows. Transcription factor that binds with high affinity to the motif 5'-TAATGARAT-3'. In Danio rerio (Zebrafish), this protein is POU domain, class 6, transcription factor 1 (pou6f1).